The primary structure comprises 84 residues: Defensin-like protein 49 (84 aa).

An N-terminal signal peptide occupies residues 1-29 (MGITKSLMIFFHIVLLAVSLSNNIILTSG). Disulfide bonds link cysteine 40–cysteine 82, cysteine 44–cysteine 68, cysteine 54–cysteine 80, and cysteine 58–cysteine 81.

The protein belongs to the DEFL family.

Its subcellular location is the secreted. This chain is Defensin-like protein 49, found in Arabidopsis thaliana (Mouse-ear cress).